The chain runs to 939 residues: Isoleucine--tRNA ligase (939 aa).

The 'HIGH' region signature appears at 58-68 (PYANGNIHIGH). Residue E562 coordinates L-isoleucyl-5'-AMP. Positions 603–607 (KMSKS) match the 'KMSKS' region motif. K606 is a binding site for ATP. Zn(2+) contacts are provided by C903, C906, C922, and C925.

The protein belongs to the class-I aminoacyl-tRNA synthetase family. IleS type 1 subfamily. Monomer. The cofactor is Zn(2+).

It localises to the cytoplasm. It catalyses the reaction tRNA(Ile) + L-isoleucine + ATP = L-isoleucyl-tRNA(Ile) + AMP + diphosphate. Catalyzes the attachment of isoleucine to tRNA(Ile). As IleRS can inadvertently accommodate and process structurally similar amino acids such as valine, to avoid such errors it has two additional distinct tRNA(Ile)-dependent editing activities. One activity is designated as 'pretransfer' editing and involves the hydrolysis of activated Val-AMP. The other activity is designated 'posttransfer' editing and involves deacylation of mischarged Val-tRNA(Ile). The sequence is that of Isoleucine--tRNA ligase from Buchnera aphidicola subsp. Baizongia pistaciae (strain Bp).